The chain runs to 257 residues: Acetylglutamate kinase (257 aa).

Residues 43–44 (GG), Arg65, and Asn157 each bind substrate.

It belongs to the acetylglutamate kinase family. ArgB subfamily.

The protein localises to the cytoplasm. It carries out the reaction N-acetyl-L-glutamate + ATP = N-acetyl-L-glutamyl 5-phosphate + ADP. It participates in amino-acid biosynthesis; L-arginine biosynthesis; N(2)-acetyl-L-ornithine from L-glutamate: step 2/4. Its function is as follows. Catalyzes the ATP-dependent phosphorylation of N-acetyl-L-glutamate. This chain is Acetylglutamate kinase, found in Actinobacillus succinogenes (strain ATCC 55618 / DSM 22257 / CCUG 43843 / 130Z).